The sequence spans 209 residues: ATP-dependent Clp protease proteolytic subunit (209 aa).

S103 (nucleophile) is an active-site residue. The active site involves H128.

This sequence belongs to the peptidase S14 family. Fourteen ClpP subunits assemble into 2 heptameric rings which stack back to back to give a disk-like structure with a central cavity, resembling the structure of eukaryotic proteasomes.

It is found in the cytoplasm. It catalyses the reaction Hydrolysis of proteins to small peptides in the presence of ATP and magnesium. alpha-casein is the usual test substrate. In the absence of ATP, only oligopeptides shorter than five residues are hydrolyzed (such as succinyl-Leu-Tyr-|-NHMec, and Leu-Tyr-Leu-|-Tyr-Trp, in which cleavage of the -Tyr-|-Leu- and -Tyr-|-Trp bonds also occurs).. In terms of biological role, cleaves peptides in various proteins in a process that requires ATP hydrolysis. Has a chymotrypsin-like activity. Plays a major role in the degradation of misfolded proteins. The sequence is that of ATP-dependent Clp protease proteolytic subunit from Lawsonia intracellularis (strain PHE/MN1-00).